A 207-amino-acid polypeptide reads, in one-letter code: 3,4-dihydroxy-2-butanone 4-phosphate synthase (207 aa).

D-ribulose 5-phosphate-binding positions include R28–E29, D33, R140–T144, and E164. A Mg(2+)-binding site is contributed by E29. Residue H143 coordinates Mg(2+).

It belongs to the DHBP synthase family. As to quaternary structure, homodimer. The cofactor is Mg(2+). Mn(2+) serves as cofactor.

The enzyme catalyses D-ribulose 5-phosphate = (2S)-2-hydroxy-3-oxobutyl phosphate + formate + H(+). Its pathway is cofactor biosynthesis; riboflavin biosynthesis; 2-hydroxy-3-oxobutyl phosphate from D-ribulose 5-phosphate: step 1/1. Functionally, catalyzes the conversion of D-ribulose 5-phosphate to formate and 3,4-dihydroxy-2-butanone 4-phosphate. In Oceanobacillus iheyensis (strain DSM 14371 / CIP 107618 / JCM 11309 / KCTC 3954 / HTE831), this protein is 3,4-dihydroxy-2-butanone 4-phosphate synthase.